The primary structure comprises 208 residues: Large ribosomal subunit protein uL3 (208 aa).

Positions 130–168 are disordered; the sequence is GGSKTHGQSDRLRAPGSVGGSSFPSRTFKGQRMAGRKGS.

The protein belongs to the universal ribosomal protein uL3 family. As to quaternary structure, part of the 50S ribosomal subunit. Forms a cluster with proteins L14 and L19.

Its function is as follows. One of the primary rRNA binding proteins, it binds directly near the 3'-end of the 23S rRNA, where it nucleates assembly of the 50S subunit. This chain is Large ribosomal subunit protein uL3, found in Chloroherpeton thalassium (strain ATCC 35110 / GB-78).